Here is a 544-residue protein sequence, read N- to C-terminus: Chaperonin GroEL 3 (544 aa).

ATP-binding positions include 30–33 (TLGP), K51, 87–91 (DGTTT), G415, and D495.

The protein belongs to the chaperonin (HSP60) family. In terms of assembly, forms a cylinder of 14 subunits composed of two heptameric rings stacked back-to-back. Interacts with the co-chaperonin GroES.

It localises to the cytoplasm. The catalysed reaction is ATP + H2O + a folded polypeptide = ADP + phosphate + an unfolded polypeptide.. In terms of biological role, together with its co-chaperonin GroES, plays an essential role in assisting protein folding. The GroEL-GroES system forms a nano-cage that allows encapsulation of the non-native substrate proteins and provides a physical environment optimized to promote and accelerate protein folding. The sequence is that of Chaperonin GroEL 3 from Psychromonas ingrahamii (strain DSM 17664 / CCUG 51855 / 37).